The chain runs to 399 residues: Succinate--CoA ligase [ADP-forming] subunit beta (399 aa).

The region spanning 9 to 254 (KELLAKYGVG…ETEEDPAEIE (246 aa)) is the ATP-grasp domain. ATP contacts are provided by residues Lys-46, 53 to 55 (GRG), Val-112, and Glu-117. 2 residues coordinate Mg(2+): Asn-209 and Asp-223. Residues Asn-274 and 331–333 (GIM) contribute to the substrate site.

Belongs to the succinate/malate CoA ligase beta subunit family. As to quaternary structure, heterotetramer of two alpha and two beta subunits. Mg(2+) is required as a cofactor.

The catalysed reaction is succinate + ATP + CoA = succinyl-CoA + ADP + phosphate. The enzyme catalyses GTP + succinate + CoA = succinyl-CoA + GDP + phosphate. The protein operates within carbohydrate metabolism; tricarboxylic acid cycle; succinate from succinyl-CoA (ligase route): step 1/1. Functionally, succinyl-CoA synthetase functions in the citric acid cycle (TCA), coupling the hydrolysis of succinyl-CoA to the synthesis of either ATP or GTP and thus represents the only step of substrate-level phosphorylation in the TCA. The beta subunit provides nucleotide specificity of the enzyme and binds the substrate succinate, while the binding sites for coenzyme A and phosphate are found in the alpha subunit. This Novosphingobium aromaticivorans (strain ATCC 700278 / DSM 12444 / CCUG 56034 / CIP 105152 / NBRC 16084 / F199) protein is Succinate--CoA ligase [ADP-forming] subunit beta.